A 235-amino-acid polypeptide reads, in one-letter code: Zorya protein ZorB (235 aa).

The helical transmembrane segment at 25–44 threads the bilayer; that stretch reads LMAGLMMVFMFISIAYMHYV. The region spanning 87–225 is the OmpA-like domain; that stretch reads QTLEVRFKSP…RVTFKVVTNA (139 aa).

The protein belongs to the MotB family.

It localises to the cell inner membrane. Functionally, component of antiviral defense system Zorya type II, composed of ZorA, ZorB and ZorE. Expression of Zorya type II in E.coli (strain MG1655) confers resistance to phages SECphi7 and T7. While most T7 infected Zorya-containing cells undergo abortive infection, a minority produce viable phage progeny. These eventually accumulate to a high multiplicity of infection, leading to culture collapse by 170 minutes after initial infection. ZorA and ZorB probably assemble in the cell inner membrane and exert their effect there. The polypeptide is Zorya protein ZorB (Escherichia coli (strain ATCC 8739 / DSM 1576 / NBRC 3972 / NCIMB 8545 / WDCM 00012 / Crooks)).